Reading from the N-terminus, the 491-residue chain is Probable V-type proton ATPase subunit B 1 (491 aa).

Position 380 (Arg380) interacts with ATP.

The protein belongs to the ATPase alpha/beta chains family. In terms of assembly, V-ATPase is a heteromultimeric enzyme made up of two complexes: the ATP-hydrolytic V1 complex and the proton translocation V0 complex. The V1 complex consists of three catalytic AB heterodimers that form a heterohexamer, three peripheral stalks each consisting of EG heterodimers, one central rotor including subunits D and F, and the regulatory subunits C and H. The proton translocation complex V0 consists of the proton transport subunit a, a ring of proteolipid subunits c9c'', rotary subunit d, subunits e and f, and the accessory subunits vah-19/Ac45 and vah-20/PRR.

Its function is as follows. Non-catalytic subunit of the V1 complex of vacuolar(H+)-ATPase (V-ATPase), a multisubunit enzyme composed of a peripheral complex (V1) that hydrolyzes ATP and a membrane integral complex (V0) that translocates protons. V-ATPase is responsible for acidifying and maintaining the pH of intracellular compartments and in some cell types, is targeted to the plasma membrane, where it is responsible for acidifying the extracellular environment. Essential for the proper assembly and activity of V-ATPase. Required maternally for early embryogenesis and zygotically during morphogenesis. Specifically, involved in the clearance of apoptotic cell corpses in embryos. Also, during embryonic development, the V-ATPase is required to repress fusion of epidermal cells probably by negatively regulating eff-1-mediated cell fusion. In neurons, required for necrotic cell death by promoting intracellular acidification. Required for cell death induced by hypoxia. Required for acidification of synaptic vesicles and the release of neurotransmitters from adult neurons. The sequence is that of Probable V-type proton ATPase subunit B 1 from Caenorhabditis briggsae.